A 113-amino-acid chain; its full sequence is Non-specific lipid-transfer protein (113 aa).

The N-terminal stretch at 1-24 is a signal peptide; sequence AQVMLMAVALVLMLAAVPRAAVAI. Disulfide bonds link Cys-26–Cys-73, Cys-36–Cys-50, Cys-51–Cys-96, and Cys-71–Cys-110. Residue Asp-30 is the site of Cis-14-hydroxy-10,13-dioxo-7-heptadecenoic acid aspartate ester attachment.

Belongs to the plant LTP family.

Its function is as follows. Plant non-specific lipid-transfer proteins transfer phospholipids as well as galactolipids across membranes. May play a role in wax or cutin deposition in the cell walls of expanding epidermal cells and certain secretory tissues. In Triticum aestivum (Wheat), this protein is Non-specific lipid-transfer protein.